A 200-amino-acid polypeptide reads, in one-letter code: uncharacterized protein (200 aa).

Composition is skewed to low complexity over residues Met1–Ser13 and Pro28–Arg44. Disordered regions lie at residues Met1–Gly116 and Leu137–Phe200. A compositionally biased stretch (basic residues) spans Arg88–Thr102. Over residues Pro189–Phe200 the composition is skewed to low complexity.

This is an uncharacterized protein from Homo sapiens (Human).